The sequence spans 146 residues: Large ribosomal subunit protein uL15 (146 aa).

The segment at 1–58 is disordered; sequence MNLSELRPAPGARKKPTRKGQGIGSGLGKTAGKGHKGQNARSGGGVRPGFEGGQMPLQ. 2 stretches are compositionally biased toward gly residues: residues 21 to 31 and 42 to 52; these read QGIGSGLGKTA and SGGGVRPGFEG.

This sequence belongs to the universal ribosomal protein uL15 family. Part of the 50S ribosomal subunit.

Functionally, binds to the 23S rRNA. In Desulforamulus reducens (strain ATCC BAA-1160 / DSM 100696 / MI-1) (Desulfotomaculum reducens), this protein is Large ribosomal subunit protein uL15.